We begin with the raw amino-acid sequence, 203 residues long: FMN-dependent NADH:quinone oxidoreductase 3 (203 aa).

FMN-binding positions include S9, 15 to 17, 95 to 98, and 139 to 142; these read SAS, MYNF, and TAGG.

The protein belongs to the azoreductase type 1 family. Homodimer. Requires FMN as cofactor.

It carries out the reaction 2 a quinone + NADH + H(+) = 2 a 1,4-benzosemiquinone + NAD(+). The enzyme catalyses N,N-dimethyl-1,4-phenylenediamine + anthranilate + 2 NAD(+) = 2-(4-dimethylaminophenyl)diazenylbenzoate + 2 NADH + 2 H(+). In terms of biological role, quinone reductase that provides resistance to thiol-specific stress caused by electrophilic quinones. Also exhibits azoreductase activity. Catalyzes the reductive cleavage of the azo bond in aromatic azo compounds to the corresponding amines. The protein is FMN-dependent NADH:quinone oxidoreductase 3 of Pseudomonas fluorescens (strain Pf0-1).